The primary structure comprises 553 residues: Putative transport protein YidE (553 aa).

5 helical membrane passes run Ile-4–Ile-24, Gly-28–Asp-48, Phe-65–Ser-85, Leu-95–Phe-115, and Met-158–Met-178. 2 consecutive RCK C-terminal domains span residues Lys-192–Lys-276 and Asp-279–Asn-361. A run of 5 helical transmembrane segments spans residues Met-371 to Val-391, Ala-403 to Phe-425, Leu-437 to Thr-457, Leu-464 to Leu-484, and Leu-533 to Gly-553.

Belongs to the AAE transporter (TC 2.A.81) family. YidE subfamily.

It localises to the cell membrane. The chain is Putative transport protein YidE from Salmonella arizonae (strain ATCC BAA-731 / CDC346-86 / RSK2980).